The chain runs to 328 residues: DNA-directed RNA polymerase subunit alpha (328 aa).

The tract at residues 1–231 (MQTNLLKPKA…EQLAVFAQLE (231 aa)) is alpha N-terminal domain (alpha-NTD). An alpha C-terminal domain (alpha-CTD) region spans residues 248–328 (FDPILLRPVD…NWPPQGLDKR (81 aa)).

This sequence belongs to the RNA polymerase alpha chain family. Homodimer. The RNAP catalytic core consists of 2 alpha, 1 beta, 1 beta' and 1 omega subunit. When a sigma factor is associated with the core the holoenzyme is formed, which can initiate transcription.

It catalyses the reaction RNA(n) + a ribonucleoside 5'-triphosphate = RNA(n+1) + diphosphate. DNA-dependent RNA polymerase catalyzes the transcription of DNA into RNA using the four ribonucleoside triphosphates as substrates. The protein is DNA-directed RNA polymerase subunit alpha of Leptothrix cholodnii (strain ATCC 51168 / LMG 8142 / SP-6) (Leptothrix discophora (strain SP-6)).